The sequence spans 175 residues: NADH-ubiquinone oxidoreductase chain 6 (175 aa).

Helical transmembrane passes span 1–21 (MMTY…VGFS), 25–45 (SPIY…GIIM), 47–67 (FGGS…MLVV), 88–108 (TVMG…LYVL), and 149–169 (YGAW…LVIL).

It belongs to the complex I subunit 6 family. Core subunit of respiratory chain NADH dehydrogenase (Complex I) which is composed of 45 different subunits.

Its subcellular location is the mitochondrion inner membrane. It catalyses the reaction a ubiquinone + NADH + 5 H(+)(in) = a ubiquinol + NAD(+) + 4 H(+)(out). Core subunit of the mitochondrial membrane respiratory chain NADH dehydrogenase (Complex I) which catalyzes electron transfer from NADH through the respiratory chain, using ubiquinone as an electron acceptor. Essential for the catalytic activity and assembly of complex I. The chain is NADH-ubiquinone oxidoreductase chain 6 (MT-ND6) from Equus asinus (Donkey).